Consider the following 108-residue polypeptide: uncharacterized protein (108 aa).

One can recognise an HTH hxlR-type domain in the interval 7–106; it reads CPRFEKAVDI…WATEWIDPSF (100 aa).

This is an uncharacterized protein from Bacillus subtilis (strain 168).